The following is a 328-amino-acid chain: Glyoxylate reductase/hydroxypyruvate reductase (328 aa).

Residue serine 36 is modified to Phosphoserine. 83–84 (VG) contacts substrate. NADP(+) contacts are provided by residues 162-164 (GRI), 185-188 (RQPR), serine 217, and isoleucine 243. Substrate-binding positions include arginine 245, aspartate 269, and 293 to 296 (HIGS). Histidine 293 serves as the catalytic Proton donor. Residue glycine 295 participates in NADP(+) binding. Threonine 298 is subject to Phosphothreonine.

It belongs to the D-isomer specific 2-hydroxyacid dehydrogenase family. Homodimer.

The enzyme catalyses glycolate + NADP(+) = glyoxylate + NADPH + H(+). It catalyses the reaction (R)-glycerate + NAD(+) = 3-hydroxypyruvate + NADH + H(+). The catalysed reaction is (R)-glycerate + NADP(+) = 3-hydroxypyruvate + NADPH + H(+). Enzyme with hydroxy-pyruvate reductase, glyoxylate reductase and D-glycerate dehydrogenase enzymatic activities. Reduces hydroxypyruvate to D-glycerate, glyoxylate to glycolate oxidizes D-glycerate to hydroxypyruvate. The sequence is that of Glyoxylate reductase/hydroxypyruvate reductase (Grhpr) from Mus musculus (Mouse).